The sequence spans 306 residues: Recombination-associated protein RdgC (306 aa).

This sequence belongs to the RdgC family.

The protein resides in the cytoplasm. It is found in the nucleoid. Its function is as follows. May be involved in recombination. This is Recombination-associated protein RdgC from Pseudomonas syringae pv. tomato (strain ATCC BAA-871 / DC3000).